A 374-amino-acid chain; its full sequence is Carbamoyl phosphate synthase small chain (374 aa).

Residues 1–185 are CPSase; that stretch reads MKAILALEDG…DVSSGYKWSD (185 aa). Positions 45, 237, and 239 each coordinate L-glutamine. In terms of domain architecture, Glutamine amidotransferase type-1 spans 189–374; the sequence is RLVLVDYGVK…RNLVKDATGK (186 aa). Cys-264 (nucleophile) is an active-site residue. Positions 265, 268, 306, 308, and 309 each coordinate L-glutamine. Residues His-347 and Glu-349 contribute to the active site.

This sequence belongs to the CarA family. As to quaternary structure, composed of two chains; the small (or glutamine) chain promotes the hydrolysis of glutamine to ammonia, which is used by the large (or ammonia) chain to synthesize carbamoyl phosphate. Tetramer of heterodimers (alpha,beta)4.

The catalysed reaction is hydrogencarbonate + L-glutamine + 2 ATP + H2O = carbamoyl phosphate + L-glutamate + 2 ADP + phosphate + 2 H(+). It catalyses the reaction L-glutamine + H2O = L-glutamate + NH4(+). The protein operates within amino-acid biosynthesis; L-arginine biosynthesis; carbamoyl phosphate from bicarbonate: step 1/1. It participates in pyrimidine metabolism; UMP biosynthesis via de novo pathway; (S)-dihydroorotate from bicarbonate: step 1/3. Functionally, small subunit of the glutamine-dependent carbamoyl phosphate synthetase (CPSase). CPSase catalyzes the formation of carbamoyl phosphate from the ammonia moiety of glutamine, carbonate, and phosphate donated by ATP, constituting the first step of 2 biosynthetic pathways, one leading to arginine and/or urea and the other to pyrimidine nucleotides. The small subunit (glutamine amidotransferase) binds and cleaves glutamine to supply the large subunit with the substrate ammonia. This Maridesulfovibrio salexigens (strain ATCC 14822 / DSM 2638 / NCIMB 8403 / VKM B-1763) (Desulfovibrio salexigens) protein is Carbamoyl phosphate synthase small chain.